We begin with the raw amino-acid sequence, 613 residues long: Dihydroxy-acid dehydratase (613 aa).

Asp-81 is a binding site for Mg(2+). A [2Fe-2S] cluster-binding site is contributed by Cys-122. Mg(2+) is bound by residues Asp-123 and Lys-124. Residue Lys-124 is modified to N6-carboxylysine. Cys-195 serves as a coordination point for [2Fe-2S] cluster. Mg(2+) is bound at residue Glu-491. Residue Ser-517 is the Proton acceptor of the active site.

The protein belongs to the IlvD/Edd family. Homodimer. Requires [2Fe-2S] cluster as cofactor. Mg(2+) serves as cofactor.

The enzyme catalyses (2R)-2,3-dihydroxy-3-methylbutanoate = 3-methyl-2-oxobutanoate + H2O. It carries out the reaction (2R,3R)-2,3-dihydroxy-3-methylpentanoate = (S)-3-methyl-2-oxopentanoate + H2O. It functions in the pathway amino-acid biosynthesis; L-isoleucine biosynthesis; L-isoleucine from 2-oxobutanoate: step 3/4. The protein operates within amino-acid biosynthesis; L-valine biosynthesis; L-valine from pyruvate: step 3/4. Functions in the biosynthesis of branched-chain amino acids. Catalyzes the dehydration of (2R,3R)-2,3-dihydroxy-3-methylpentanoate (2,3-dihydroxy-3-methylvalerate) into 2-oxo-3-methylpentanoate (2-oxo-3-methylvalerate) and of (2R)-2,3-dihydroxy-3-methylbutanoate (2,3-dihydroxyisovalerate) into 2-oxo-3-methylbutanoate (2-oxoisovalerate), the penultimate precursor to L-isoleucine and L-valine, respectively. This Nitrobacter hamburgensis (strain DSM 10229 / NCIMB 13809 / X14) protein is Dihydroxy-acid dehydratase.